A 322-amino-acid chain; its full sequence is Beta-ketoacyl-[acyl-carrier-protein] synthase III (322 aa).

Catalysis depends on residues Cys-112 and His-249. The segment at 250 to 254 (QANQR) is ACP-binding. The active site involves Asn-279.

This sequence belongs to the thiolase-like superfamily. FabH family. As to quaternary structure, homodimer.

It localises to the cytoplasm. The catalysed reaction is malonyl-[ACP] + acetyl-CoA + H(+) = 3-oxobutanoyl-[ACP] + CO2 + CoA. It functions in the pathway lipid metabolism; fatty acid biosynthesis. In terms of biological role, catalyzes the condensation reaction of fatty acid synthesis by the addition to an acyl acceptor of two carbons from malonyl-ACP. Catalyzes the first condensation reaction which initiates fatty acid synthesis and may therefore play a role in governing the total rate of fatty acid production. Possesses both acetoacetyl-ACP synthase and acetyl transacylase activities. Its substrate specificity determines the biosynthesis of branched-chain and/or straight-chain of fatty acids. The protein is Beta-ketoacyl-[acyl-carrier-protein] synthase III of Caulobacter vibrioides (strain ATCC 19089 / CIP 103742 / CB 15) (Caulobacter crescentus).